Reading from the N-terminus, the 540-residue chain is Glucose-6-phosphate isomerase (540 aa).

Glu350 acts as the Proton donor in catalysis. Active-site residues include His381 and Lys503.

It belongs to the GPI family.

The protein resides in the cytoplasm. It carries out the reaction alpha-D-glucose 6-phosphate = beta-D-fructose 6-phosphate. Its pathway is carbohydrate biosynthesis; gluconeogenesis. It participates in carbohydrate degradation; glycolysis; D-glyceraldehyde 3-phosphate and glycerone phosphate from D-glucose: step 2/4. In terms of biological role, catalyzes the reversible isomerization of glucose-6-phosphate to fructose-6-phosphate. The sequence is that of Glucose-6-phosphate isomerase from Burkholderia orbicola (strain MC0-3).